The chain runs to 463 residues: ATP-dependent protease ATPase subunit HslU (463 aa).

Residues Ile19, 61–66 (GVGKTE), Asp277, Glu341, and Arg413 each bind ATP.

Belongs to the ClpX chaperone family. HslU subfamily. As to quaternary structure, a double ring-shaped homohexamer of HslV is capped on each side by a ring-shaped HslU homohexamer. The assembly of the HslU/HslV complex is dependent on binding of ATP.

The protein localises to the cytoplasm. Its function is as follows. ATPase subunit of a proteasome-like degradation complex; this subunit has chaperone activity. The binding of ATP and its subsequent hydrolysis by HslU are essential for unfolding of protein substrates subsequently hydrolyzed by HslV. HslU recognizes the N-terminal part of its protein substrates and unfolds these before they are guided to HslV for hydrolysis. The polypeptide is ATP-dependent protease ATPase subunit HslU (Bacillus cereus (strain AH187)).